An 80-amino-acid chain; its full sequence is Kappa-actitoxin-Avd4f (80 aa).

Positions 1–19 (MNKALFLCLVVLCAAVVFA) are cleaved as a signal peptide. Residues 20 to 31 (AEDLQKAKHAPF) constitute a propeptide that is removed on maturation. Disulfide bonds link Cys41–Cys76, Cys43–Cys69, and Cys59–Cys77.

Belongs to the sea anemone type 3 (BDS) potassium channel toxin family. As to expression, moderately expressed in the ectodermal tissue from the distal and proximal tentacles, body wall, and oral disk.

It is found in the secreted. The protein localises to the nematocyst. Blocks Kv3 voltage-gated potassium channels. Reduces blood pressure. This chain is Kappa-actitoxin-Avd4f, found in Anemonia viridis (Snakelocks anemone).